We begin with the raw amino-acid sequence, 357 residues long: Peptide chain release factor 1 (357 aa).

An N5-methylglutamine modification is found at Gln234. The segment at 284–304 (RIEGERSEDRKSKIGTGDRSE) is disordered.

It belongs to the prokaryotic/mitochondrial release factor family. Methylated by PrmC. Methylation increases the termination efficiency of RF1.

It localises to the cytoplasm. In terms of biological role, peptide chain release factor 1 directs the termination of translation in response to the peptide chain termination codons UAG and UAA. This chain is Peptide chain release factor 1, found in Pelagibacter ubique (strain HTCC1062).